The following is a 269-amino-acid chain: MGQNDLMGTAEDFADQFLRVTKQYLPHVARLCLISTFLEDGIRMWFQWSEQRDYIDTTWNCGYLLASSFVFLNLLGQLTGCVLVLSRNFVQYACFGLFGIIALQTIAYSILWDLKFLMRNLALGGGLLLLLAESRSEGKSMFAGVPTMRESSPKQYMQLGGRVLLVLMFMTLLHFDASFFSIVQNIVGTALMILVAIGFKTKLAALTLVVWLFAINVYFNAFWTIPVYKPMHDFLKYDFFQTMSVIGGLLLVVALGPGGVSMDEKKKEW.

A run of 5 helical transmembrane segments spans residues 64–84 (LLASSFVFLNLLGQLTGCVLV), 92–112 (YACFGLFGIIALQTIAYSILW), 179–199 (FFSIVQNIVGTALMILVAIGF), 203–223 (LAALTLVVWLFAINVYFNAFW), and 239–259 (FFQTMSVIGGLLLVVALGPGG). The short motif at 266 to 269 (KKEW) is the Di-lysine motif element.

The protein belongs to the SURF4 family. In terms of assembly, found in a complex composed at least of SURF4, TMED2 and TMED10. May interact with LMAN1. Interacts with ZFYVE27 and with KIF5A in a ZFYVE27-dependent manner. Interacts with STING1. Interacts with SAR1B. Interacts with TMEM41B.

The protein resides in the endoplasmic reticulum membrane. The protein localises to the endoplasmic reticulum-Golgi intermediate compartment membrane. It is found in the golgi apparatus membrane. Functionally, endoplasmic reticulum cargo receptor that mediates the export of lipoproteins by recruiting cargos into COPII vesicles to facilitate their secretion. Acts as a cargo receptor for lipoproteins bearing both APOB and APOA1, thereby regulating lipoprotein delivery and the maintenance of lipid homeostasis. Synergizes with the GTPase SAR1B to mediate transport of circulating lipoproteins. Promotes the secretion of PCSK9. Also mediates the efficient secretion of erythropoietin (EPO). May also play a role in the maintenance of the architecture of the endoplasmic reticulum-Golgi intermediate compartment and of the Golgi. The sequence is that of Surfeit locus protein 4 from Homo sapiens (Human).